The following is a 272-amino-acid chain: Nitrogenase iron protein (272 aa).

8-15 (GKGGIGKS) serves as a coordination point for ATP. C94 is a [4Fe-4S] cluster binding site. ADP-ribosylarginine; by dinitrogenase reductase ADP-ribosyltransferase is present on R97. C129 is a binding site for [4Fe-4S] cluster.

It belongs to the NifH/BchL/ChlL family. In terms of assembly, homodimer. Requires [4Fe-4S] cluster as cofactor. In terms of processing, the reversible ADP-ribosylation of Arg-97 inactivates the nitrogenase reductase and regulates nitrogenase activity.

The catalysed reaction is N2 + 8 reduced [2Fe-2S]-[ferredoxin] + 16 ATP + 16 H2O = H2 + 8 oxidized [2Fe-2S]-[ferredoxin] + 2 NH4(+) + 16 ADP + 16 phosphate + 6 H(+). Functionally, the key enzymatic reactions in nitrogen fixation are catalyzed by the nitrogenase complex, which has 2 components: the iron protein and the molybdenum-iron protein. The polypeptide is Nitrogenase iron protein (Clostridium acetobutylicum (strain ATCC 824 / DSM 792 / JCM 1419 / IAM 19013 / LMG 5710 / NBRC 13948 / NRRL B-527 / VKM B-1787 / 2291 / W)).